The chain runs to 739 residues: Adhesion G protein-coupled receptor L4 (739 aa).

An N-terminal signal peptide occupies residues 1 to 19; that stretch reads MRLLPLLVGFSTLLNCSYT. Positions 20–57 constitute an EGF-like 1 domain; that stretch reads QNCSKTTCLPNAKCEVHNGVEACFCSQGYSGNGVTICE. Residues 20-481 are Extracellular-facing; the sequence is QNCSKTTCLP…DYNILTRITQ (462 aa). Asparagine 21 carries N-linked (GlcNAc...) asparagine glycosylation. Intrachain disulfides connect cysteine 22–cysteine 33, cysteine 27–cysteine 42, cysteine 44–cysteine 56, cysteine 62–cysteine 74, cysteine 68–cysteine 83, cysteine 85–cysteine 106, cysteine 112–cysteine 124, cysteine 118–cysteine 133, and cysteine 135–cysteine 156. The EGF-like 2; calcium-binding domain maps to 58–107; that stretch reads DIDECSESSVCGDHAVCENVNGGFSCFCREGYQTATGKSQFTPNDGSYCQ. Positions 108 to 157 constitute an EGF-like 3; calcium-binding domain; sequence DIDECSESSVCGDHAVCENVNGGFSCFCREGYQTATGKSQFTPNDGSYCQ. N-linked (GlcNAc...) asparagine glycosylation is found at asparagine 176, asparagine 226, asparagine 237, asparagine 298, asparagine 422, asparagine 430, and asparagine 444. Residues 293-468 form the GAIN-B domain; it reads SQFDMNSTDL…AILMSSTSSI (176 aa). Cystine bridges form between cysteine 418-cysteine 450 and cysteine 438-cysteine 452. The segment at 418–468 is GPS; the sequence is CAFWNYSVDAMNNGSWSTEGCELTHSNDTHTSCRCSHLTHFAILMSSTSSI. The helical transmembrane segment at 482-502 threads the bilayer; the sequence is LGIIISLICLAICIFTFWFFS. At 503–513 the chain is on the cytoplasmic side; that stretch reads EIQSTRTTIHK. The helical transmembrane segment at 514 to 534 threads the bilayer; it reads NLCCSLFLAELVFLIGININT. Residues 535–548 lie on the Extracellular side of the membrane; the sequence is NKLVCSIIAGLLHY. Residues 549 to 569 traverse the membrane as a helical segment; that stretch reads FFLAAFAWMCIEGIHLYLIVV. Over 570–581 the chain is Cytoplasmic; it reads GVIYNKGFLHKN. Residues 582 to 602 form a helical membrane-spanning segment; that stretch reads FYIFGYLSPAVVVGFSASLGY. Residues 603 to 622 are Extracellular-facing; sequence RYYGTTKVCWLSTENNFIWS. Residues 623-643 traverse the membrane as a helical segment; that stretch reads FIGPACLIILVNLLAFGVIIY. Topologically, residues 644–667 are cytoplasmic; the sequence is KVFRHTAGLKPEVSCYENIRSCAR. The chain crosses the membrane as a helical span at residues 668–688; that stretch reads GALALLFLLGTTWIFGVLHVV. At 689–695 the chain is on the extracellular side; it reads HASVVTA. The helical transmembrane segment at 696–716 threads the bilayer; it reads YLFTVSNAFQGMFIFLFLCVL. Residues 717–739 are Cytoplasmic-facing; that stretch reads SRKIQEEYYRLFKNVPCCFGCLR.

The protein belongs to the G-protein coupled receptor 2 family. Adhesion G-protein coupled receptor (ADGR) subfamily. As to quaternary structure, heterodimer of 2 chains generated by proteolytic processing; the large extracellular N-terminal fragment and the membrane-bound C-terminal fragment predominantly remain associated and non-covalently linked. Glycosylated. In terms of processing, proteolytically cleaved into 2 subunits, an extracellular alpha subunit and a seven-transmembrane subunit.

It is found in the cell membrane. Its function is as follows. Endothelial orphan receptor that acts as a key regulator of angiogenesis. The protein is Adhesion G protein-coupled receptor L4 (Adgrl4) of Mus musculus (Mouse).